A 357-amino-acid polypeptide reads, in one-letter code: UPF0283 membrane protein BSUIS_A1077 (357 aa).

The segment at 1 to 36 (MSDKTPRKPTAFRLEQPARVSAASEQEEPRHPRAVK) is disordered. The span at 27-36 (EEPRHPRAVK) shows a compositional bias: basic and acidic residues. 2 helical membrane passes run 78–98 (ILFGALGILVSFAIGIWTEDL) and 109–129 (LGWTALGVAMVALAAFAAIIL).

This sequence belongs to the UPF0283 family.

The protein resides in the cell inner membrane. This Brucella suis (strain ATCC 23445 / NCTC 10510) protein is UPF0283 membrane protein BSUIS_A1077.